A 508-amino-acid chain; its full sequence is Glycerol kinase (508 aa).

Position 14 (T14) interacts with ADP. Positions 14, 15, and 16 each coordinate ATP. T14 provides a ligand contact to sn-glycerol 3-phosphate. An ADP-binding site is contributed by R18. Residues R84, E85, and Y136 each coordinate sn-glycerol 3-phosphate. Positions 84, 85, and 136 each coordinate glycerol. H232 bears the Phosphohistidine; by HPr mark. D246 is a binding site for sn-glycerol 3-phosphate. Positions 246 and 247 each coordinate glycerol. ADP contacts are provided by T268 and G311. T268, G311, Q315, and G412 together coordinate ATP. ADP contacts are provided by G412 and N416.

The protein belongs to the FGGY kinase family. As to quaternary structure, homotetramer and homodimer (in equilibrium). Post-translationally, the phosphoenolpyruvate-dependent sugar phosphotransferase system (PTS), including enzyme I, and histidine-containing protein (HPr) are required for the phosphorylation, which leads to the activation of the enzyme.

The enzyme catalyses glycerol + ATP = sn-glycerol 3-phosphate + ADP + H(+). It participates in polyol metabolism; glycerol degradation via glycerol kinase pathway; sn-glycerol 3-phosphate from glycerol: step 1/1. Its activity is regulated as follows. Activated by phosphorylation and inhibited by fructose 1,6-bisphosphate (FBP). Its function is as follows. Key enzyme in the regulation of glycerol uptake and metabolism. Catalyzes the phosphorylation of glycerol to yield sn-glycerol 3-phosphate. The chain is Glycerol kinase from Streptococcus pyogenes serotype M3 (strain ATCC BAA-595 / MGAS315).